A 55-amino-acid chain; its full sequence is uncharacterized protein (55 aa).

This is an uncharacterized protein from Orgyia pseudotsugata multicapsid polyhedrosis virus (OpMNPV).